The sequence spans 274 residues: 4-deoxy-L-threo-5-hexosulose-uronate ketol-isomerase (274 aa).

4 residues coordinate Zn(2+): histidine 192, histidine 194, glutamate 199, and histidine 241.

It belongs to the KduI family. It depends on Zn(2+) as a cofactor.

It catalyses the reaction 5-dehydro-4-deoxy-D-glucuronate = 3-deoxy-D-glycero-2,5-hexodiulosonate. Its pathway is glycan metabolism; pectin degradation; 2-dehydro-3-deoxy-D-gluconate from pectin: step 4/5. Functionally, catalyzes the isomerization of 5-dehydro-4-deoxy-D-glucuronate to 3-deoxy-D-glycero-2,5-hexodiulosonate. The sequence is that of 4-deoxy-L-threo-5-hexosulose-uronate ketol-isomerase from Cereibacter sphaeroides (strain ATCC 17025 / ATH 2.4.3) (Rhodobacter sphaeroides).